A 627-amino-acid polypeptide reads, in one-letter code: MTTELLDRIHSPDDVRQLDRRELKALAEELRGFVLESVSRTGGHLSSNLGTVELTLALHRVFDTPHDRIVWDVGHQSYPHKILTGRRAGMASLRQEGGISGFPKRSESEYDAFGTAHSSTSISAALGMAVASRNAGIQRQHIAVIGDGAMSAGMAFEAMNNAGVTPDINLLVVLNDNDMSISPPVGALNRYLARLMSGRFYAAAKNVGRAMLQHVPPVLELARRFEEHAKGMVTPATLFEEFGFNYVGPIDGHDLDALVPTLQNLKALQGLQFLHVVTRKGHGYKLAEADPVLYHGPGKFDPAVGIQQGKASTRKTFTQVFGQWLCDMAERDERLVGITPAMREGSGLVEFERRFPRRYFDVGIAEQHAVTFAAGLACEGQKPVVAIYSTFLQRGYDQLIHDVALQNLDVTFALDRAGLVGADGATHAGNYDIAYLRCVPNMVVAAPSDENEARLLLSTCYEYPGPASVRYPRGAGRGAEISPGLDTVPMGKGIVRRQGRGIAILAFGTLTQAALAAAEALDATVADMRFVKPIDRELILQLAAGHDAIVTVEEAAIMGGAGSAVIEVLHHEGVVVPVLQLGLPDRFIDHGDQAALLAGLGLDAAGIERSIRARFEKSNLQSGAQTK.

Residues His-75 and 116-118 (AHS) contribute to the thiamine diphosphate site. A Mg(2+)-binding site is contributed by Asp-147. Residues 148–149 (GA), Asn-177, Tyr-284, and Glu-366 each bind thiamine diphosphate. Asn-177 lines the Mg(2+) pocket.

It belongs to the transketolase family. DXPS subfamily. In terms of assembly, homodimer. Mg(2+) serves as cofactor. Thiamine diphosphate is required as a cofactor.

The enzyme catalyses D-glyceraldehyde 3-phosphate + pyruvate + H(+) = 1-deoxy-D-xylulose 5-phosphate + CO2. Its pathway is metabolic intermediate biosynthesis; 1-deoxy-D-xylulose 5-phosphate biosynthesis; 1-deoxy-D-xylulose 5-phosphate from D-glyceraldehyde 3-phosphate and pyruvate: step 1/1. In terms of biological role, catalyzes the acyloin condensation reaction between C atoms 2 and 3 of pyruvate and glyceraldehyde 3-phosphate to yield 1-deoxy-D-xylulose-5-phosphate (DXP). This Bordetella petrii (strain ATCC BAA-461 / DSM 12804 / CCUG 43448) protein is 1-deoxy-D-xylulose-5-phosphate synthase.